A 513-amino-acid chain; its full sequence is Maturase K (513 aa).

Belongs to the intron maturase 2 family. MatK subfamily.

It is found in the plastid. Its subcellular location is the chloroplast. Functionally, usually encoded in the trnK tRNA gene intron. Probably assists in splicing its own and other chloroplast group II introns. This is Maturase K from Molinia caerulea (Purple moor-grass).